Here is a 211-residue protein sequence, read N- to C-terminus: Large ribosomal subunit protein uL3 (211 aa).

The interval Arg130 to Arg154 is disordered.

This sequence belongs to the universal ribosomal protein uL3 family. Part of the 50S ribosomal subunit. Forms a cluster with proteins L14 and L19.

One of the primary rRNA binding proteins, it binds directly near the 3'-end of the 23S rRNA, where it nucleates assembly of the 50S subunit. The chain is Large ribosomal subunit protein uL3 from Lachnospira eligens (strain ATCC 27750 / DSM 3376 / VPI C15-48 / C15-B4) (Eubacterium eligens).